A 250-amino-acid polypeptide reads, in one-letter code: Peptidyl-tRNA hydrolase (250 aa).

Residue Y14 coordinates tRNA. H19 (proton acceptor) is an active-site residue. 3 residues coordinate tRNA: F64, N66, and N112. A disordered region spans residues 192–250 (MGDGNQRPGGVKTDPAQLEKAPPKAQSHIRQARQNQKKPNIPESGPMAEMLKKLLGKKD). Residues 219–229 (HIRQARQNQKK) are compositionally biased toward polar residues. Basic and acidic residues predominate over residues 241-250 (MLKKLLGKKD).

This sequence belongs to the PTH family. Monomer.

It localises to the cytoplasm. It catalyses the reaction an N-acyl-L-alpha-aminoacyl-tRNA + H2O = an N-acyl-L-amino acid + a tRNA + H(+). In terms of biological role, hydrolyzes ribosome-free peptidyl-tRNAs (with 1 or more amino acids incorporated), which drop off the ribosome during protein synthesis, or as a result of ribosome stalling. Its function is as follows. Catalyzes the release of premature peptidyl moieties from peptidyl-tRNA molecules trapped in stalled 50S ribosomal subunits, and thus maintains levels of free tRNAs and 50S ribosomes. The protein is Peptidyl-tRNA hydrolase of Brucella canis (strain ATCC 23365 / NCTC 10854 / RM-666).